A 351-amino-acid polypeptide reads, in one-letter code: ATP-dependent protease ATP-binding subunit-like protein (351 aa).

The segment at 1 to 26 is disordered; that stretch reads MPYITDMLRDRNSAATPPAEERSEPV. An ATP-binding site is contributed by 79-86; that stretch reads GPTGVGKT.

It belongs to the ClpA/ClpB family.

The protein is ATP-dependent protease ATP-binding subunit-like protein of Rhodococcus erythropolis (Arthrobacter picolinophilus).